A 338-amino-acid chain; its full sequence is Formamidase (338 aa).

In terms of domain architecture, CN hydrolase spans 15-257 (VVIGLAQLAL…DEIVCCELRP (243 aa)). The active-site Proton acceptor is the E61. K130 serves as the catalytic Proton donor. The Nucleophile role is filled by C163.

It belongs to the carbon-nitrogen hydrolase superfamily. Aliphatic amidase family.

The catalysed reaction is formamide + H2O = formate + NH4(+). Functionally, is an aliphatic amidase with a restricted substrate specificity, as it only hydrolyzes formamide. The protein is Formamidase of Pseudomonas syringae pv. tomato (strain ATCC BAA-871 / DC3000).